A 143-amino-acid chain; its full sequence is MPKSPSKSSPRKGSPRKGSPRKGSPKRGGKGAKRAGKGGRRNVVKRRRRRRESYGIYIYKVLKQVHPDTGISSRGMSVMNSFVNDVFERIAGEASRLTSANRRSTISSREIQTAVRLLLPGELAKHAVSEGTKAVTKYTTARR.

The disordered stretch occupies residues 1–49 (MPKSPSKSSPRKGSPRKGSPRKGSPKRGGKGAKRAGKGGRRNVVKRRRR). 5 short sequence motifs (SPKK motif) span residues 4-7 (SPSK), 9-12 (SPRK), 14-17 (SPRK), 19-22 (SPRK), and 24-27 (SPKR). Positions 9-49 (SPRKGSPRKGSPRKGSPKRGGKGAKRAGKGGRRNVVKRRRR) are enriched in basic residues. Phosphoserine occurs at positions 14, 19, and 24. O-linked (GlcNAc) serine glycosylation occurs at Ser-129. Lys-137 participates in a covalent cross-link: Glycyl lysine isopeptide (Lys-Gly) (interchain with G-Cter in ubiquitin).

It belongs to the histone H2B family. The nucleosome is a histone octamer containing two molecules each of H2A, H2B, H3 and H4 assembled in one H3-H4 heterotetramer and two H2A-H2B heterodimers. The octamer wraps approximately 147 bp of DNA. Post-translationally, monoubiquitination of Lys-137 gives a specific tag for epigenetic transcriptional activation and is also prerequisite for histone H3 'Lys-4' and 'Lys-79' methylation. Phosphorylated on SPKK motifs 3, 4 and 5; which may regulate DNA binding. Dephosphorylated during maturation of spermatids to mature sperm and rephosphorylated at fertilization. In terms of processing, glcNAcylation at Ser-129 promotes monoubiquitination of Lys-137. It fluctuates in response to extracellular glucose, and associates with transcribed genes.

The protein resides in the nucleus. Its subcellular location is the chromosome. Its function is as follows. Core component of nucleosome. Nucleosomes wrap and compact DNA into chromatin, limiting DNA accessibility to the cellular machineries which require DNA as a template. Histones thereby play a central role in transcription regulation, DNA repair, DNA replication and chromosomal stability. DNA accessibility is regulated via a complex set of post-translational modifications of histones, also called histone code, and nucleosome remodeling. The protein is Histone H2B.2, sperm of Psammechinus miliaris (Green sea urchin).